Here is a 497-residue protein sequence, read N- to C-terminus: Apolipoprotein N-acyltransferase (497 aa).

6 helical membrane passes run 21-41 (FAPFYLYPIPVVTLALLALLW), 51-71 (ALTGFTFGMGLFGAGVTWLYV), 85-105 (VLALIILCAYLALFPALTGWI), 119-139 (GMVAALWALAEWLRGTLFTGF), 157-177 (FAPVIGVYGLSLLLMLSAAWL), and 189-209 (FWLGLGSVWLIGFGLQQIHWT). The CN hydrolase domain occupies 221 to 461 (LQGNIPQNMK…GLHSTAQGFG (241 aa)). Residue glutamate 259 is the Proton acceptor of the active site. Lysine 319 is an active-site residue. The active-site Nucleophile is cysteine 371. A helical transmembrane segment spans residues 472-492 (SLVFALIGLLLLAGSLAAFSG).

Belongs to the CN hydrolase family. Apolipoprotein N-acyltransferase subfamily.

The protein localises to the cell inner membrane. It catalyses the reaction N-terminal S-1,2-diacyl-sn-glyceryl-L-cysteinyl-[lipoprotein] + a glycerophospholipid = N-acyl-S-1,2-diacyl-sn-glyceryl-L-cysteinyl-[lipoprotein] + a 2-acyl-sn-glycero-3-phospholipid + H(+). Its pathway is protein modification; lipoprotein biosynthesis (N-acyl transfer). Functionally, catalyzes the phospholipid dependent N-acylation of the N-terminal cysteine of apolipoprotein, the last step in lipoprotein maturation. This chain is Apolipoprotein N-acyltransferase, found in Nitrosomonas europaea (strain ATCC 19718 / CIP 103999 / KCTC 2705 / NBRC 14298).